Here is a 747-residue protein sequence, read N- to C-terminus: Catalase-peroxidase (747 aa).

An N-terminal signal peptide occupies residues 1–27 (MRKFSVSKVALLAATMAPALLPAAARA). Residues 116-238 (WHSAGTYRTA…LAAVQMGLIY (123 aa)) constitute a cross-link (tryptophyl-tyrosyl-methioninium (Trp-Tyr) (with M-264)). The active-site Proton acceptor is histidine 117. A cross-link (tryptophyl-tyrosyl-methioninium (Tyr-Met) (with W-116)) is located at residues 238–264 (YVNPEGPNGNPDPLLAAKDIRETFGRM). Histidine 279 lines the heme b pocket.

The protein belongs to the peroxidase family. Peroxidase/catalase subfamily. In terms of assembly, homodimer or homotetramer. The cofactor is heme b. Post-translationally, formation of the three residue Trp-Tyr-Met cross-link is important for the catalase, but not the peroxidase activity of the enzyme.

The catalysed reaction is H2O2 + AH2 = A + 2 H2O. It carries out the reaction 2 H2O2 = O2 + 2 H2O. In terms of biological role, bifunctional enzyme with both catalase and broad-spectrum peroxidase activity. This is Catalase-peroxidase from Novosphingobium aromaticivorans (strain ATCC 700278 / DSM 12444 / CCUG 56034 / CIP 105152 / NBRC 16084 / F199).